The sequence spans 1492 residues: Neogenin (1492 aa).

Positions 1–36 (MAAEREAGRLLCTSSSRRCCPPPPLLLLLPLLLLLG) are cleaved as a signal peptide. Over 37-1136 (RPASGAAATK…PTSPLDSNML (1100 aa)) the chain is Extracellular. Ig-like C2-type domains lie at 63 to 158 (PFYF…AKLT), 163 to 249 (PRFT…AELK), 254 to 347 (PEEI…AELT), and 352 to 437 (PGFL…AQLI). N-linked (GlcNAc...) asparagine glycosylation occurs at Asn-84. 3 disulfide bridges follow: Cys-85–Cys-140, Cys-184–Cys-232, and Cys-281–Cys-331. A glycan (N-linked (GlcNAc...) asparagine) is linked at Asn-221. An N-linked (GlcNAc...) asparagine glycan is attached at Asn-337. Cys-373 and Cys-421 form a disulfide bridge. Fibronectin type-III domains lie at 472–566 (APRD…TQPE), 572–662 (PAPN…TLSD), 667–762 (APQN…TFES), 772–862 (VPSS…RPHT), 887–986 (PPVG…LVPT), and 988–1085 (PPKD…TPKA). Asn-501 and Asn-520 each carry an N-linked (GlcNAc...) asparagine glycan. Asn-670 and Asn-746 each carry an N-linked (GlcNAc...) asparagine glycan. An N-linked (GlcNAc...) asparagine glycan is attached at Asn-940. The disordered stretch occupies residues 1072 to 1128 (GPMSEAVQFRTPKADSSDKMPNDQALGSAGKGSRLPDLGSDYKPPMSGSNSPHGSPT). Over residues 1083 to 1092 (PKADSSDKMP) the composition is skewed to basic and acidic residues. Residues 1118 to 1128 (SGSNSPHGSPT) show a composition bias toward polar residues. A helical transmembrane segment spans residues 1137–1157 (LVIIVSVGVITIVVVVVIAVF). The Cytoplasmic portion of the chain corresponds to 1158–1492 (CTRRTTSHQK…MKDLNAITTA (335 aa)). 3 disordered regions span residues 1205-1237 (PIDK…SMDS), 1266-1300 (PKMM…HSSS), and 1321-1396 (SMSL…FAVP). 2 positions are modified to phosphoserine: Ser-1209 and Ser-1225. The span at 1222 to 1237 (PRNSQDITPVDNSMDS) shows a compositional bias: polar residues. Position 1229 is a phosphothreonine (Thr-1229). 2 stretches are compositionally biased toward polar residues: residues 1321–1353 (SMSL…TCCT) and 1361–1380 (ATSS…QSLP). Ser-1432 carries the phosphoserine modification. Thr-1435 carries the phosphothreonine modification. Ser-1463, Ser-1465, and Ser-1466 each carry phosphoserine.

This sequence belongs to the immunoglobulin superfamily. DCC family. In terms of assembly, interacts with BMP2, BMP4, BMP6, and BMP7. Interacts with RGMA and RGMB. Interacts with MYO10. In terms of tissue distribution, widely expressed.

It is found in the cell membrane. In terms of biological role, multi-functional cell surface receptor regulating cell adhesion in many diverse developmental processes, including neural tube and mammary gland formation, myogenesis and angiogenesis. Receptor for members of the BMP, netrin, and repulsive guidance molecule (RGM) families. Netrin-Neogenin interactions result in a chemoattractive axon guidance response and cell-cell adhesion, the interaction between NEO1/Neogenin and RGMa and RGMb induces a chemorepulsive response. The chain is Neogenin from Mus musculus (Mouse).